A 33-amino-acid polypeptide reads, in one-letter code: Photosystem II reaction center protein Psb30 (33 aa).

A helical membrane pass occupies residues 5-25; sequence ILSQLIAIAVTLFLGPVVVIL.

The protein belongs to the Psb30/Ycf12 family. In terms of assembly, PSII is composed of 1 copy each of membrane proteins PsbA, PsbB, PsbC, PsbD, PsbE, PsbF, PsbH, PsbI, PsbJ, PsbK, PsbL, PsbM, PsbT, PsbX, PsbY, PsbZ, Psb30/Ycf12, peripheral proteins of the oxygen-evolving complex and a large number of cofactors. It forms dimeric complexes.

It localises to the plastid. Its subcellular location is the chloroplast thylakoid membrane. A core subunit of photosystem II (PSII), probably helps stabilize the reaction center. This Oedogonium cardiacum (Filamentous green alga) protein is Photosystem II reaction center protein Psb30.